A 191-amino-acid chain; its full sequence is MAQLFFRYGSMNSGKTIEILKVAHNYEEQNKTVAIFTSGIDDRDQVGFISSRIGLKREATPIFSDTNIFEIVVNIKPKPNCVLLDESQFLEKEHVFQLAKIVDELNIPVIAYGLKNDFRNELFEGSKYLLLYADKLEEMKTICWFCAKKATMVLRVDDKGKPVYTGEQIMIGGNDHYYPVCRKCHANPPIK.

Residues 9–16 (GSMNSGKT) and 85–88 (DESQ) each bind ATP. E86 functions as the Proton acceptor in the catalytic mechanism. Zn(2+) contacts are provided by C143, C146, C181, and C184.

Belongs to the thymidine kinase family. In terms of assembly, homotetramer.

The protein resides in the cytoplasm. The catalysed reaction is thymidine + ATP = dTMP + ADP + H(+). The polypeptide is Thymidine kinase (Listeria monocytogenes serovar 1/2a (strain ATCC BAA-679 / EGD-e)).